Here is a 118-residue protein sequence, read N- to C-terminus: Turripeptide NCR-01 (118 aa).

The first 16 residues, Met-1–Ala-16, serve as a signal peptide directing secretion. The disordered stretch occupies residues Gln-63 to Tyr-118. Polar residues predominate over residues Gln-85–Asp-102.

Expressed by the venom duct.

It localises to the secreted. The protein is Turripeptide NCR-01 of Gemmula speciosa (Splendid gem-turris).